The primary structure comprises 897 residues: MGDIKNKDHTTSVNHNLMASAGNYTAEKEIGKGSFATVYRGHLTSDKSQHVAIKEVSRAKLKNKKLLENLEIEIAILKKIKHPHIVGLIDCERTSTDFYLIMEYCALGDLTFLLKRRKELMENHPLLRTVFEKYPPPSENHNGLHRAFVLSYLQQLASALKFLRSKNLVHRDIKPQNLLLSTPLIGYHDSKSFHELGFVGIYNLPILKIADFGFARFLPNTSLAETLCGSPLYMAPEILNYQKYNAKADLWSVGTVVFEMCCGTPPFRASNHLELFKKIKRANDVITFPSYCNIEPELKELICSLLTFDPAQRIGFEEFFANKVVNEDLSSYELEDDLPELESKSKGIVESNMFVSEYLSKQPKSPNSNLAGHQSMADNPAELSDALKNSNILTAPAVKTDHTQAVDKKASNNKYHNSLVSDRSFEREYVVVEKKSVEVNSLADEVAQAGFNPNPIKHPTSTQNQNVLLNEQFSPNNQQYFQNQGENPRLLRATSSSSGGSDGSRRPSLVDRRLSISSLNPSNALSRALGIASTRLFGGANQQQQQQQITSSPPYSQTLLNSQLFHELTENIILRIDHLQHPETLKLDNTNIVSILESLAAKAFVVYSYAEVKFSQIVPLSTTLKGMANFENRRSMDSNAIAEEQDSDDAEEEDETLKKYKEDCLSTKTFGKGRTLSATSQLSATFNKLPRSEMILLCNEAIVLYMKALSILSKSMQVTSNWWYESQEKSCSLRVNVLVQWLREKFNECLEKADFLRLKINDLRFKHASEVAENQTLEEKGSSEEPVYLEKLLYDRALEISKMAAHMELKGENLYNCELAYATSLWMLETSLDDDDFTNAYGDYPFKTNIHLKSNDVEDKEKYHSVLDENDRIIIRKYIDSIANRLKILRQKMNHQN.

Residues 24 to 325 (YTAEKEIGKG…FEEFFANKVV (302 aa)) enclose the Protein kinase domain. Residues 30 to 38 (IGKGSFATV) and Lys-54 each bind ATP. Ser-34 bears the Phosphoserine mark. A Phosphothreonine modification is found at Thr-129. Asp-172 serves as the catalytic Proton acceptor. Thr-226 is modified (phosphothreonine; by autocatalysis). Phosphoserine occurs at positions 304, 365, and 390. The LIR signature appears at 429 to 432 (YVVV). The segment at 490–509 (LLRATSSSSGGSDGSRRPSL) is disordered. A phosphoserine; by PKA mark is found at Ser-508 and Ser-515. Ser-533, Ser-551, and Ser-552 each carry phosphoserine. Phosphothreonine is present on Thr-590. 9 positions are modified to phosphoserine: Ser-621, Ser-635, Ser-638, Ser-647, Ser-677, Ser-680, Ser-683, Ser-769, and Ser-783. The required for Cvt trafficking stretch occupies residues 880-886 (DSIANRL).

The protein belongs to the protein kinase superfamily. Ser/Thr protein kinase family. APG1/unc-51/ULK1 subfamily. As to quaternary structure, homodimer. Dimerization requires the presence of ATG13. Forms a ternary complex with ATG13 and ATG17. Also interacts with ATG11. Post-translationally, autophosphorylated at Thr-226 and Ser-390. The phosphorylation state may play a role in the induction of protein degradation upon starvation. Phosphorylation at Thr-226 within the activation loop is required for protein kinase activity whereas phosphorylation at Ser-34 leads to inhibition of kinase activity. Phosphorylation of Ser-508 and Ser-515 by PKA is required to induce autophagy but not for kinase activity.

It is found in the cytoplasm. The protein resides in the preautophagosomal structure membrane. The enzyme catalyses L-seryl-[protein] + ATP = O-phospho-L-seryl-[protein] + ADP + H(+). It catalyses the reaction L-threonyl-[protein] + ATP = O-phospho-L-threonyl-[protein] + ADP + H(+). With respect to regulation, activated by hypophosphorylated form of ATG13 (present in nitrogen starvation conditions). Also activated by autophopsphorylation of Thr-226 and inhibited by phosphorylation of Ser-34. In terms of biological role, serine/threonine protein kinase involved in the cytoplasm to vacuole transport (Cvt) and found to be essential in autophagy, where it is required for the formation of autophagosomes. Involved in the clearance of protein aggregates which cannot be efficiently cleared by the proteasome. Required for selective autophagic degradation of the nucleus (nucleophagy) as well as for mitophagy which contributes to regulate mitochondrial quantity and quality by eliminating the mitochondria to a basal level to fulfill cellular energy requirements and preventing excess ROS production. Also involved in endoplasmic reticulum-specific autophagic process, in selective removal of ER-associated degradation (ERAD) substrates. Plays a key role in ATG9 and ATG23 cycling through the pre-autophagosomal structure and is necessary to promote ATG18 binding to ATG9 through phosphorylation of ATG9. Catalyzes phosphorylation of ATG4, decreasing the interaction between ATG4 and ATG8 and impairing deconjugation of PE-conjugated forms of ATG8. Finally, ATG1 is also required for the maintenance of cell viability under starvation and for glycogen storage during stationary phase. Plays a role in genome stability through suppression of abnormal mitosis under starvation, and in regulation of filamentous growth. The protein is Serine/threonine-protein kinase ATG1 of Saccharomyces cerevisiae (strain YJM789) (Baker's yeast).